Reading from the N-terminus, the 388-residue chain is Carbamoyl phosphate synthase small chain (388 aa).

Residues 1–192 (MPLSDAMPAL…FNPDGTVKNG (192 aa)) are CPSase. S51, G244, and G246 together coordinate L-glutamine. Residues 196–382 (TVVALDFGVK…VHQMRTTKQA (187 aa)) form the Glutamine amidotransferase type-1 domain. The active-site Nucleophile is C272. L-glutamine-binding residues include M273, Q276, N312, and F315. Residues H355 and E357 contribute to the active site.

Belongs to the CarA family. Composed of two chains; the small (or glutamine) chain promotes the hydrolysis of glutamine to ammonia, which is used by the large (or ammonia) chain to synthesize carbamoyl phosphate. Tetramer of heterodimers (alpha,beta)4.

It carries out the reaction hydrogencarbonate + L-glutamine + 2 ATP + H2O = carbamoyl phosphate + L-glutamate + 2 ADP + phosphate + 2 H(+). The catalysed reaction is L-glutamine + H2O = L-glutamate + NH4(+). The protein operates within amino-acid biosynthesis; L-arginine biosynthesis; carbamoyl phosphate from bicarbonate: step 1/1. Its pathway is pyrimidine metabolism; UMP biosynthesis via de novo pathway; (S)-dihydroorotate from bicarbonate: step 1/3. Small subunit of the glutamine-dependent carbamoyl phosphate synthetase (CPSase). CPSase catalyzes the formation of carbamoyl phosphate from the ammonia moiety of glutamine, carbonate, and phosphate donated by ATP, constituting the first step of 2 biosynthetic pathways, one leading to arginine and/or urea and the other to pyrimidine nucleotides. The small subunit (glutamine amidotransferase) binds and cleaves glutamine to supply the large subunit with the substrate ammonia. This chain is Carbamoyl phosphate synthase small chain, found in Nostoc sp. (strain PCC 7120 / SAG 25.82 / UTEX 2576).